The primary structure comprises 206 residues: Max dimerization protein 3 (206 aa).

Residues 8 to 25 (IQVLLQAAEFLERREREA) are interaction with SIN3A and SIN3B. Disordered stretches follow at residues 25–67 (AEHG…ELEK) and 146–171 (RERL…QEEL). The 53-residue stretch at 57 to 109 (SGRSVHNELEKRRRAQLKRCLERLKQQMPLGADCARYTTLSLLRRARMHIQKL) folds into the bHLH domain.

As to quaternary structure, efficient DNA binding requires dimerization with another bHLH protein. Binds DNA as a heterodimer with MAX. Interacts with SIN3A AND SIN3B. Interacts with RNF17.

The protein localises to the nucleus. Transcriptional repressor. Binds with MAX to form a sequence-specific DNA-binding protein complex which recognizes the core sequence 5'-CAC[GA]TG-3'. Antagonizes MYC transcriptional activity by competing for MAX and suppresses MYC dependent cell transformation. In Homo sapiens (Human), this protein is Max dimerization protein 3 (MXD3).